An 824-amino-acid polypeptide reads, in one-letter code: MTELNEEATVNEIEQEVQEQQEQVSIPHIPPRPTRHSPPAIDPDQSTSTSNSTNHPVIPQRPTSRPTKSQESKIPQQETPQETQELSSSGKDESDSSAKQNFEIPVIPTRPSRQHSEEPIIPPRPQRTTSQEPVIPIRPESTKSHEDKEEKPISEPVIPSRPKSKSNKPVAPSRPESSKSVEPEVPARPTRDHLTEPEVPLRPVSSREEAKEGLDNLIDQLEKDLSETVEPSVHAPIEDEDESPIEPVPSASGLRLPSEVDQQQESEIQEETNAIAEGQLNSETINSSNTFGDGEVTPGNSTTKTSFKSDEDEDDEHANHLGTGGDSSSFDDDVETISQEQEDHLEEEQQQEQQQEQEQEQERAAPVVQSLGTAIEEDDQAGGDETDTERAEAPAEEPVKEEPVKEEPVKEEPVKEEPVKEGLIKQESKPVIPVIPSRPPKKASLSRSTTEEDSIGLDQSKPNINKPIIPKRPTTESLKSGDESTSSQTQQPSIPVRPTKSNSSTSSGSSETVTKSKPPPPKPKKLSSKIAAFQQQLFNPMKSGSSADEDENKGEGEQPKPRKAVDSSKFLSRFGGNAIPLPGMFNPGQIPMHARPSSTTKDDDNDDDKEEQGSSRSVENAPVRRTRGPRGKKLPKAVSEAKVESESKFCLESGELFGLVFTKKVEESVDGLNEEEVAHKSLEEEVTEVNVKPEVASKTVEKQEEEDDIIDEYEKDDDIVEKDEPKSENDVAKEEVIEAKIDESVTVPGEFKEDTKEEEEEKEEEPVHRIAVSTDSRESPIEEEEDDDIVIDKTGEEKLNSSNSSLVDVKQEMEDELSKNDEML.

Disordered regions lie at residues 15 to 645 and 694 to 824; these read QEVQ…KVES and EVAS…DEML. Residues 44–74 show a composition bias toward polar residues; that stretch reads DQSTSTSNSTNHPVIPQRPTSRPTKSQESKI. Residues 75-89 show a composition bias toward low complexity; sequence PQQETPQETQELSSS. Composition is skewed to basic and acidic residues over residues 140-153 and 205-226; these read ESTK…EKPI and SSRE…KDLS. Over residues 279–291 the composition is skewed to polar residues; that stretch reads QLNSETINSSNTF. 2 stretches are compositionally biased toward acidic residues: residues 343-359 and 375-387; these read DHLE…EQEQ and IEED…DETD. Basic and acidic residues predominate over residues 388–428; sequence TERAEAPAEEPVKEEPVKEEPVKEEPVKEEPVKEGLIKQES. Residues 499-516 are compositionally biased toward low complexity; the sequence is TKSNSSTSSGSSETVTKS. Over residues 533–546 the composition is skewed to polar residues; it reads FQQQLFNPMKSGSS. A compositionally biased stretch (basic and acidic residues) spans 553–566; the sequence is KGEGEQPKPRKAVD. Residues 624-635 are compositionally biased toward basic residues; the sequence is RRTRGPRGKKLP. A compositionally biased stretch (acidic residues) spans 703-721; that stretch reads QEEEDDIIDEYEKDDDIVE. Basic and acidic residues-rich tracts occupy residues 722–743, 790–799, and 809–824; these read KDEP…KIDE, VIDKTGEEKL, and VKQE…DEML.

Belongs to the AIM21 family.

It localises to the cytoplasm. The protein resides in the cytoskeleton. The protein localises to the actin patch. Involved in mitochondrial migration along actin filaments. The polypeptide is Altered inheritance of mitochondria protein 21 (AIM21) (Candida tropicalis (strain ATCC MYA-3404 / T1) (Yeast)).